A 158-amino-acid polypeptide reads, in one-letter code: MRLLPLASVTLLSVLCAQAFAAKLEDTAPYPKAEDGFTRQVIHLPKQQHEDRYKVEILAGKTLTVDCNLQRLGGKLLEKNLEGWGYPYYRLDQVSGPISTRMACPDGKTREDFVPVTGDGFVLRYNSKLPIVIYAPKDVEVRYRLWSAADKTENARQE.

Positions 1–21 (MRLLPLASVTLLSVLCAQAFA) are cleaved as a signal peptide. The cysteines at positions 67 and 104 are disulfide-linked.

Belongs to the protease inhibitor I11 (ecotin) family. As to quaternary structure, homodimer.

The protein resides in the periplasm. General inhibitor of family S1 serine proteases. This chain is Ecotin, found in Pseudomonas fluorescens (strain ATCC BAA-477 / NRRL B-23932 / Pf-5).